The sequence spans 688 residues: Putative proline--tRNA ligase YHR020W (688 aa).

Residue serine 149 is modified to Phosphoserine. Residue threonine 170 is modified to Phosphothreonine. The disordered stretch occupies residues 631–650 (ESSAKKDDGEEFEEDDKAPS). The residue at position 655 (serine 655) is a Phosphoserine.

It belongs to the class-II aminoacyl-tRNA synthetase family.

It carries out the reaction tRNA(Pro) + L-proline + ATP = L-prolyl-tRNA(Pro) + AMP + diphosphate. The protein is Putative proline--tRNA ligase YHR020W of Saccharomyces cerevisiae (strain ATCC 204508 / S288c) (Baker's yeast).